Consider the following 160-residue polypeptide: Transcription elongation factor GreA (160 aa).

Positions 50–70 (AAREQQSFNEGRIQELEAKLS) form a coiled coil.

This sequence belongs to the GreA/GreB family.

Functionally, necessary for efficient RNA polymerase transcription elongation past template-encoded arresting sites. The arresting sites in DNA have the property of trapping a certain fraction of elongating RNA polymerases that pass through, resulting in locked ternary complexes. Cleavage of the nascent transcript by cleavage factors such as GreA or GreB allows the resumption of elongation from the new 3'terminus. GreA releases sequences of 2 to 3 nucleotides. In Legionella pneumophila (strain Corby), this protein is Transcription elongation factor GreA.